The primary structure comprises 84 residues: Small ribosomal subunit protein bS20 (84 aa).

It belongs to the bacterial ribosomal protein bS20 family.

Its function is as follows. Binds directly to 16S ribosomal RNA. The protein is Small ribosomal subunit protein bS20 of Ligilactobacillus salivarius (strain UCC118) (Lactobacillus salivarius).